Consider the following 126-residue polypeptide: Adenosine 5'-monophosphoramidase HINT1 (126 aa).

A2 carries the post-translational modification N-acetylalanine. Residues 18-126 form the HIT domain; sequence IFGKIIRKEI…GGRQMNWPPG (109 aa). An N6-acetyllysine mark is found at K21 and K30. An AMP-binding site is contributed by 43–44; that stretch reads DI. Residues S45 and S72 each carry the phosphoserine modification. AMP-binding positions include N99, 105–107, and 112–114; these read GQS and HLH. The short motif at 110 to 114 is the Histidine triad motif element; it reads HVHLH. H112 serves as the catalytic Tele-AMP-histidine intermediate.

The protein belongs to the HINT family. In terms of assembly, homodimer. Interacts with CDK7. Interacts with RUVBL1 and RUVBL2 and is associated with the LEF1/TCF1-CTNNB1 complex and with a KAT5 histone acetyltransferase complex. Identified in a complex with MITF and CTNNB1. Interacts with CDC34 and RBX1, and is part of a SCF (SKP2-CUL1-F-box protein) E3 ubiquitin-protein ligase complex. Interacts with SUMO1, SUMO2 and RGS17. Interacts with the Ten-1 ICD form of TENM1. Interacts with CALM1; interaction increases in the presence of calcium ions. As to expression, widely expressed.

The protein resides in the cytoplasm. It localises to the nucleus. The catalysed reaction is adenosine 5'-phosphoramidate + H2O = AMP + NH4(+). Its function is as follows. Exhibits adenosine 5'-monophosphoramidase activity, hydrolyzing purine nucleotide phosphoramidates with a single phosphate group such as adenosine 5'monophosphoramidate (AMP-NH2) to yield AMP and NH2. Hydrolyzes adenosine 5'monophosphomorpholidate (AMP-morpholidate) and guanosine 5'monophosphomorpholidate (GMP-morpholidate). Hydrolyzes lysyl-AMP (AMP-N-epsilon-(N-alpha-acetyl lysine methyl ester)) generated by lysine tRNA ligase. Hydrolyzes Met-AMP, His-AMP, Asp-AMP, lysyl-GMP (GMP-N-epsilon-(N-alpha-acetyl lysine methyl ester)) and AMP-N-alanine methyl ester. Can also convert adenosine 5'-O-phosphorothioate and guanosine 5'-O-phosphorothioate to the corresponding nucleoside 5'-O-phosphates with concomitant release of hydrogen sulfide. In addition, functions as a scaffolding protein that modulates transcriptional activation by the LEF1/TCF1-CTNNB1 complex and by the complex formed with MITF and CTNNB1. Modulates p53/TP53 levels and p53/TP53-mediated apoptosis. Modulates proteasomal degradation of target proteins by the SCF (SKP2-CUL1-F-box protein) E3 ubiquitin-protein ligase complex. Also exhibits SUMO-specific isopeptidase activity, deconjugating SUMO1 from RANGAP1 and RGS17. The polypeptide is Adenosine 5'-monophosphoramidase HINT1 (HINT1) (Oryctolagus cuniculus (Rabbit)).